A 133-amino-acid chain; its full sequence is MTTAVLEALFAELRFDADGLVPAIAQQHDTGEVLMLAWMNRESIKETLAGGRVVYWSRSRRALWRKGDTSGQIQHLKELRLDCDGDALLLLVDQVGVACHTGRRNCFYRAVRDGTLAVIADVEVPAEELYGKG.

Residue aspartate 82 coordinates Mg(2+). Residue cysteine 83 coordinates Zn(2+). Positions 84 and 86 each coordinate Mg(2+). Residues cysteine 99 and cysteine 106 each contribute to the Zn(2+) site.

This sequence belongs to the PRA-CH family. In terms of assembly, homodimer. It depends on Mg(2+) as a cofactor. Requires Zn(2+) as cofactor.

Its subcellular location is the cytoplasm. It carries out the reaction 1-(5-phospho-beta-D-ribosyl)-5'-AMP + H2O = 1-(5-phospho-beta-D-ribosyl)-5-[(5-phospho-beta-D-ribosylamino)methylideneamino]imidazole-4-carboxamide. It participates in amino-acid biosynthesis; L-histidine biosynthesis; L-histidine from 5-phospho-alpha-D-ribose 1-diphosphate: step 3/9. Catalyzes the hydrolysis of the adenine ring of phosphoribosyl-AMP. The chain is Phosphoribosyl-AMP cyclohydrolase from Rhodospirillum centenum (strain ATCC 51521 / SW).